Here is a 105-residue protein sequence, read N- to C-terminus: Large ribosomal subunit protein uL24 (105 aa).

Belongs to the universal ribosomal protein uL24 family. Part of the 50S ribosomal subunit.

Its function is as follows. One of two assembly initiator proteins, it binds directly to the 5'-end of the 23S rRNA, where it nucleates assembly of the 50S subunit. In terms of biological role, one of the proteins that surrounds the polypeptide exit tunnel on the outside of the subunit. The chain is Large ribosomal subunit protein uL24 from Saccharophagus degradans (strain 2-40 / ATCC 43961 / DSM 17024).